We begin with the raw amino-acid sequence, 86 residues long: Neuropeptide-like 2 (86 aa).

A signal peptide spans 1-19 (MAKLAICILVFALFALALS). 2 propeptides span residues 20–34 (ARVP…QEFL) and 45–86 (IEKL…AAST).

Hemolymph (at protein level).

It localises to the secreted. This is Neuropeptide-like 2 (Nplp2) from Drosophila melanogaster (Fruit fly).